Consider the following 369-residue polypeptide: Putative glutamate--cysteine ligase 2-1 (369 aa).

This sequence belongs to the glutamate--cysteine ligase type 2 family. YbdK subfamily.

The enzyme catalyses L-cysteine + L-glutamate + ATP = gamma-L-glutamyl-L-cysteine + ADP + phosphate + H(+). Functionally, ATP-dependent carboxylate-amine ligase which exhibits weak glutamate--cysteine ligase activity. The chain is Putative glutamate--cysteine ligase 2-1 from Rhodococcus jostii (strain RHA1).